A 687-amino-acid polypeptide reads, in one-letter code: MASHTLRPHRSPSPSPEPPVNLANPAKLTRQSLGPPTSGNSKGFGSLGLGPGLASPSSPSQPRHVSSSVAMGMGNRDSLSPRPSGVGSGRAVSATTGPRPSSEFIPTREAKTPEAEQIDQWFKHLANWEATLEEMAAASTDQNFTEELGAIEQWFRVLSEAERTAALYSLLQYSTPVQIRFFISVLHHMSQSDPMSALLSPSLSGSNAFQTQVESKLSNMNLKSPSAGGGAGFAGSSGNGHYLAPDDAAAKAAKARQNRISAPGTLQPHDRWQGQLDQVVERGTSPGLESNMSGRSRSKSPTPEPRPKSTDFSGKPRESLRRESAAFPRSPRVSAGSPGIGLGIGHESPMASPFGNNASWASMVNTPLVQNFNDGKLVAPASVADLSQALNMATLQLNNPGYLPLDDARKYRRPTGGLASGQTSRNVSGQYNDDGEIVNPHTTQPGTPSGLLPNQFGGGRSPLVDQFGLGGLGIGADSTTLANLGLNYNLAGLGGVNPGLNGLTAAQAQAAQMLAMQQQLQNSQYSPFNASAPSLQPGLNPSRRGAGRGQSSHLNQHYNQHQQQHQPGRRSPNPLKSHSPAPGQQTGGGGAGGGAGVAGPEDVDVKVLEDVPNWLRVLRLHKYTPNFEKSNWNDMVLMTDQDLQDNGISAQGARTKFLKVFYNVRTKMDIAHPPGQEEYAPGPKESK.

The segment covering 1–10 has biased composition (basic residues); it reads MASHTLRPHR. 3 disordered regions span residues 1–115, 248–341, and 526–598; these read MASH…TPEA, AAAK…PGIG, and SPFN…AGVA. Polar residues predominate over residues 29–41; sequence TRQSLGPPTSGNS. The segment covering 52–68 has biased composition (low complexity); sequence GLASPSSPSQPRHVSSS. Residues 287 to 301 are compositionally biased toward polar residues; the sequence is GLESNMSGRSRSKSP. The segment covering 305–324 has biased composition (basic and acidic residues); the sequence is PRPKSTDFSGKPRESLRRES. Positions 526–539 are enriched in polar residues; the sequence is SPFNASAPSLQPGL. Residues 550–566 are compositionally biased toward low complexity; that stretch reads QSSHLNQHYNQHQQQHQ. A compositionally biased stretch (gly residues) spans 585-597; that stretch reads QTGGGGAGGGAGV. One can recognise an SAM domain in the interval 606 to 667; it reads KVLEDVPNWL…LKVFYNVRTK (62 aa).

Belongs to the VTS1 family. As to quaternary structure, monomer. Binds to RNA.

Its subcellular location is the cytoplasm. The protein localises to the cytosol. It localises to the P-body. In terms of biological role, RNA-binding protein involved in post-transcriptional regulation through transcript degradation. The sequence is that of RNA-binding protein VTS1 from Cryptococcus neoformans var. grubii serotype A (strain H99 / ATCC 208821 / CBS 10515 / FGSC 9487) (Filobasidiella neoformans var. grubii).